The sequence spans 209 residues: Orotate phosphoribosyltransferase (209 aa).

5-phospho-alpha-D-ribose 1-diphosphate contacts are provided by residues arginine 96, lysine 100, histidine 102, and 122–130 (EDLISTGGS). An orotate-binding site is contributed by serine 126.

It belongs to the purine/pyrimidine phosphoribosyltransferase family. PyrE subfamily. In terms of assembly, homodimer. Requires Mg(2+) as cofactor.

It catalyses the reaction orotidine 5'-phosphate + diphosphate = orotate + 5-phospho-alpha-D-ribose 1-diphosphate. It functions in the pathway pyrimidine metabolism; UMP biosynthesis via de novo pathway; UMP from orotate: step 1/2. Its function is as follows. Catalyzes the transfer of a ribosyl phosphate group from 5-phosphoribose 1-diphosphate to orotate, leading to the formation of orotidine monophosphate (OMP). This chain is Orotate phosphoribosyltransferase, found in Lactococcus lactis subsp. lactis (strain IL1403) (Streptococcus lactis).